Reading from the N-terminus, the 299-residue chain is Nicotinate-nucleotide pyrophosphorylase [carboxylating] (299 aa).

The tract at residues 8–12 (LLLPP) is important for hexamer formation. Quinolinate contacts are provided by residues R102, 138-139 (RK), 160-161 (HR), K171, E201, D222, 248-250 (SGG), and G270.

The protein belongs to the NadC/ModD family. Hexamer formed by 3 homodimers.

The enzyme catalyses nicotinate beta-D-ribonucleotide + CO2 + diphosphate = quinolinate + 5-phospho-alpha-D-ribose 1-diphosphate + 2 H(+). The protein operates within cofactor biosynthesis; NAD(+) biosynthesis; nicotinate D-ribonucleotide from quinolinate: step 1/1. In terms of biological role, involved in the catabolism of quinolinic acid (QA). The sequence is that of Nicotinate-nucleotide pyrophosphorylase [carboxylating] from Sus scrofa (Pig).